The primary structure comprises 492 residues: Protein nucleotidyltransferase YdiU (492 aa).

8 residues coordinate ATP: glycine 88, glycine 90, arginine 91, lysine 111, aspartate 123, glycine 124, arginine 174, and arginine 181. The active-site Proton acceptor is the aspartate 250. The Mg(2+) site is built by asparagine 251 and aspartate 260. Aspartate 260 contacts ATP.

Belongs to the SELO family. Mg(2+) is required as a cofactor. Mn(2+) serves as cofactor.

It carries out the reaction L-seryl-[protein] + ATP = 3-O-(5'-adenylyl)-L-seryl-[protein] + diphosphate. The enzyme catalyses L-threonyl-[protein] + ATP = 3-O-(5'-adenylyl)-L-threonyl-[protein] + diphosphate. The catalysed reaction is L-tyrosyl-[protein] + ATP = O-(5'-adenylyl)-L-tyrosyl-[protein] + diphosphate. It catalyses the reaction L-histidyl-[protein] + UTP = N(tele)-(5'-uridylyl)-L-histidyl-[protein] + diphosphate. It carries out the reaction L-seryl-[protein] + UTP = O-(5'-uridylyl)-L-seryl-[protein] + diphosphate. The enzyme catalyses L-tyrosyl-[protein] + UTP = O-(5'-uridylyl)-L-tyrosyl-[protein] + diphosphate. In terms of biological role, nucleotidyltransferase involved in the post-translational modification of proteins. It can catalyze the addition of adenosine monophosphate (AMP) or uridine monophosphate (UMP) to a protein, resulting in modifications known as AMPylation and UMPylation. The sequence is that of Protein nucleotidyltransferase YdiU from Rhodopseudomonas palustris (strain TIE-1).